Reading from the N-terminus, the 353-residue chain is Photosystem II protein D1 (353 aa).

Threonine 2 is modified (N-acetylthreonine). At threonine 2 the chain carries Phosphothreonine. The next 3 membrane-spanning stretches (helical) occupy residues 29–46, 118–133, and 142–156; these read YIGW…TATS, HFLL…EWEL, and WIAV…AATA. Histidine 118 contacts chlorophyll a. Tyrosine 126 is a binding site for pheophytin a. The [CaMn4O5] cluster site is built by aspartate 170 and glutamate 189. Residues 197-218 form a helical membrane-spanning segment; sequence FHMLGVAGVFGGSLFSAMHGSL. Histidine 198 is a binding site for chlorophyll a. Residues histidine 215 and 264 to 265 contribute to the a quinone site; that span reads SF. Histidine 215 is a Fe cation binding site. Histidine 272 contributes to the Fe cation binding site. A helical transmembrane segment spans residues 274-288; the sequence is FLAAWPVVGIWFTAL. Residues histidine 332, glutamate 333, aspartate 342, and alanine 344 each contribute to the [CaMn4O5] cluster site. Residues 345–353 constitute a propeptide that is removed on maturation; it reads AVEAPAVNG.

The protein belongs to the reaction center PufL/M/PsbA/D family. In terms of assembly, PSII is composed of 1 copy each of membrane proteins PsbA, PsbB, PsbC, PsbD, PsbE, PsbF, PsbH, PsbI, PsbJ, PsbK, PsbL, PsbM, PsbT, PsbX, PsbY, PsbZ, Psb30/Ycf12, at least 3 peripheral proteins of the oxygen-evolving complex and a large number of cofactors. It forms dimeric complexes. The cofactor is The D1/D2 heterodimer binds P680, chlorophylls that are the primary electron donor of PSII, and subsequent electron acceptors. It shares a non-heme iron and each subunit binds pheophytin, quinone, additional chlorophylls, carotenoids and lipids. D1 provides most of the ligands for the Mn4-Ca-O5 cluster of the oxygen-evolving complex (OEC). There is also a Cl(-1) ion associated with D1 and D2, which is required for oxygen evolution. The PSII complex binds additional chlorophylls, carotenoids and specific lipids.. In terms of processing, tyr-161 forms a radical intermediate that is referred to as redox-active TyrZ, YZ or Y-Z. Post-translationally, C-terminally processed by CTPA; processing is essential to allow assembly of the oxygen-evolving complex and thus photosynthetic growth.

It localises to the plastid. Its subcellular location is the chloroplast thylakoid membrane. The catalysed reaction is 2 a plastoquinone + 4 hnu + 2 H2O = 2 a plastoquinol + O2. Photosystem II (PSII) is a light-driven water:plastoquinone oxidoreductase that uses light energy to abstract electrons from H(2)O, generating O(2) and a proton gradient subsequently used for ATP formation. It consists of a core antenna complex that captures photons, and an electron transfer chain that converts photonic excitation into a charge separation. The D1/D2 (PsbA/PsbD) reaction center heterodimer binds P680, the primary electron donor of PSII as well as several subsequent electron acceptors. This chain is Photosystem II protein D1, found in Marchantia polymorpha (Common liverwort).